The chain runs to 323 residues: Aldo-keto reductase family 1 member C4 (323 aa).

NADP(+)-binding positions include 20 to 24 (GFGTY) and aspartate 50. Tyrosine 55 functions as the Proton donor in the catalytic mechanism. Histidine 117 contacts substrate. NADP(+) contacts are provided by residues 166–167 (SN), glutamine 190, 216–221 (HSALGT), and 270–280 (KSYNEQRIREN).

This sequence belongs to the aldo/keto reductase family. Monomer. Post-translationally, the N-terminus is blocked. Liver specific.

The protein resides in the cytoplasm. It localises to the cytosol. It catalyses the reaction a 3alpha-hydroxysteroid + NADP(+) = a 3-oxosteroid + NADPH + H(+). The catalysed reaction is a 3alpha-hydroxysteroid + NAD(+) = a 3-oxosteroid + NADH + H(+). The enzyme catalyses 5alpha-androstane-3alpha,17beta-diol + NADP(+) = 17beta-hydroxy-5alpha-androstan-3-one + NADPH + H(+). It carries out the reaction 5alpha-androstane-3beta,17beta-diol + NADP(+) = 17beta-hydroxy-5alpha-androstan-3-one + NADPH + H(+). It catalyses the reaction 5alpha-androstane-3alpha,17beta-diol + NAD(+) = 17beta-hydroxy-5alpha-androstan-3-one + NADH + H(+). The catalysed reaction is 17beta-estradiol + NADP(+) = estrone + NADPH + H(+). The enzyme catalyses 17beta-estradiol + NAD(+) = estrone + NADH + H(+). It carries out the reaction (20S)-hydroxypregn-4-en-3-one + NADP(+) = progesterone + NADPH + H(+). It catalyses the reaction (20S)-hydroxypregn-4-en-3-one + NAD(+) = progesterone + NADH + H(+). The catalysed reaction is androsterone + NADP(+) = 5alpha-androstan-3,17-dione + NADPH + H(+). The enzyme catalyses testosterone + NADP(+) = androst-4-ene-3,17-dione + NADPH + H(+). It carries out the reaction testosterone + NAD(+) = androst-4-ene-3,17-dione + NADH + H(+). It catalyses the reaction 3alpha-hydroxy-5alpha-androstane 17-O-(beta-D-glucuronate) + NADP(+) = 5alpha-dihydrotestosterone 17-O-(beta-D-glucuronate) + NADPH + H(+). The catalysed reaction is (3beta,5alpha,17beta)-3-hydroxy-androstan-17-yl sulfate + NADP(+) = 5alpha-dihydrotestosterone sulfate + NADPH + H(+). The enzyme catalyses 5alpha-androstane-3alpha,17beta-diol + NAD(+) = androsterone + NADH + H(+). It carries out the reaction chlordecone alcohol + NADP(+) = chlordecone + NADPH + H(+). It functions in the pathway steroid metabolism. Inhibited by nonsteroidal the anti-inflammatory drugs (NSAID) flufenamic. The oxidation reaction is inhibited by low micromolar concentrations of NADPH. Cytosolic aldo-keto reductase that catalyzes the NADH and NADPH-dependent reduction of ketosteroids to hydroxysteroids. Liver specific enzyme that acts as an NAD(P)(H)-dependent 3-, 17- and 20-ketosteroid reductase on the steroid nucleus and side chain. Displays the ability to catalyze both oxidation and reduction in vitro, but most probably acts as a reductase in vivo since the oxidase activity measured in vitro is inhibited by physiological concentration of NADPH. Acts preferentially as a 3-alpha-hydroxysteroid dehydrogenase (HSD) with a subsidiary 3-beta-HSD activity. Catalyzes efficiently the transformation of the potent androgen 5-alpha-dihydrotestosterone (5alpha-DHT or 17beta-hydroxy-5alpha-androstan-3-one) into the less active form, 5-alpha-androstan-3-alpha,17-beta-diol (3-alpha-diol). Catalyzes the reduction of estrone into 17beta-estradiol but with low efficiency. Metabolizes a broad spectrum of natural and synthetic therapeutic steroid and plays an important role in metabolism of androgens, estrogens, progestereone and conjugated steroids. Catalyzes the biotransformation of the pesticide chlordecone (kepone) to its corresponding alcohol leading to increased biliary excretion of the pesticide and concomitant reduction of its neurotoxicity since bile is the major excretory route. This chain is Aldo-keto reductase family 1 member C4 (AKR1C4), found in Homo sapiens (Human).